We begin with the raw amino-acid sequence, 371 residues long: COP9 signalosome complex subunit 5 (371 aa).

Residues 51–188 (VKISAVALIK…IGAFRTYPEG (138 aa)) form the MPN domain. Positions 134, 136, and 147 each coordinate Zn(2+). A JAMM motif motif is present at residues 134–147 (HSHPGYGCWLSGID). A compositionally biased stretch (low complexity) spans 278–292 (NSSSKLKLKPTQPTT). Disordered regions lie at residues 278-333 (NSSS…SRIT) and 352-371 (TPLTQSVDDKSAQATVQGRY). A compositionally biased stretch (basic and acidic residues) spans 293–313 (KGKETTEGSDKKLKKGEKEFS). Residues 323 to 333 (NKVTQESSRIT) are compositionally biased toward polar residues.

It belongs to the peptidase M67A family. CSN5 subfamily. Component of the COP9 signalosome (CSN) complex.

It is found in the cytoplasm. The protein resides in the nucleus. Catalytic Component of the COP9 signalosome (CSN) complex that acts as an regulator of the ubiquitin (Ubl) conjugation pathway by mediating the deneddylation of the cullin subunit of SCF-type E3 ubiquitin-protein ligase complexes. This is COP9 signalosome complex subunit 5 (RRI1) from Cryptococcus neoformans var. neoformans serotype D (strain B-3501A) (Filobasidiella neoformans).